The sequence spans 183 residues: Large ribosomal subunit protein uL5 (183 aa).

This sequence belongs to the universal ribosomal protein uL5 family. In terms of assembly, part of the 50S ribosomal subunit; part of the 5S rRNA/L5/L18/L25 subcomplex. Contacts the 5S rRNA and the P site tRNA. Forms a bridge to the 30S subunit in the 70S ribosome.

In terms of biological role, this is one of the proteins that bind and probably mediate the attachment of the 5S RNA into the large ribosomal subunit, where it forms part of the central protuberance. In the 70S ribosome it contacts protein S13 of the 30S subunit (bridge B1b), connecting the 2 subunits; this bridge is implicated in subunit movement. Contacts the P site tRNA; the 5S rRNA and some of its associated proteins might help stabilize positioning of ribosome-bound tRNAs. The protein is Large ribosomal subunit protein uL5 of Kosmotoga olearia (strain ATCC BAA-1733 / DSM 21960 / TBF 19.5.1).